The following is a 250-amino-acid chain: Probable transcriptional regulatory protein SAV_6832 (250 aa).

The protein belongs to the TACO1 family.

It localises to the cytoplasm. The sequence is that of Probable transcriptional regulatory protein SAV_6832 from Streptomyces avermitilis (strain ATCC 31267 / DSM 46492 / JCM 5070 / NBRC 14893 / NCIMB 12804 / NRRL 8165 / MA-4680).